Consider the following 138-residue polypeptide: Basic phospholipase A2 BP-I (138 aa).

The first 16 residues, 1 to 16 (MRTLWIMAVLLLGVDG), serve as a signal peptide directing secretion. Disulfide bonds link Cys42–Cys132, Cys44–Cys60, Cys59–Cys112, Cys65–Cys138, Cys66–Cys105, Cys73–Cys98, and Cys91–Cys103. Positions 45 and 47 each coordinate Ca(2+). His63 is an active-site residue. Asp106 is a catalytic residue.

This sequence belongs to the phospholipase A2 family. Group II subfamily. K49 sub-subfamily. Ca(2+) serves as cofactor. Expressed by the venom gland.

It is found in the secreted. It carries out the reaction a 1,2-diacyl-sn-glycero-3-phosphocholine + H2O = a 1-acyl-sn-glycero-3-phosphocholine + a fatty acid + H(+). Snake venom phospholipase A2 (PLA2) that has strong myotoxic activity with a low phospholipase A2 activity. PLA2 catalyzes the calcium-dependent hydrolysis of the 2-acyl groups in 3-sn-phosphoglycerides. The protein is Basic phospholipase A2 BP-I of Protobothrops flavoviridis (Habu).